The sequence spans 152 residues: Deoxyuridine 5'-triphosphate nucleotidohydrolase (152 aa).

Substrate-binding positions include 71-73 (RSG), N84, 88-90 (LID), and M98.

It belongs to the dUTPase family. Requires Mg(2+) as cofactor.

It carries out the reaction dUTP + H2O = dUMP + diphosphate + H(+). Its pathway is pyrimidine metabolism; dUMP biosynthesis; dUMP from dCTP (dUTP route): step 2/2. Its function is as follows. This enzyme is involved in nucleotide metabolism: it produces dUMP, the immediate precursor of thymidine nucleotides and it decreases the intracellular concentration of dUTP so that uracil cannot be incorporated into DNA. This is Deoxyuridine 5'-triphosphate nucleotidohydrolase from Enterobacter sp. (strain 638).